A 302-amino-acid chain; its full sequence is MFDQATSMGDGVSEERSPLCGKSATSCSERVRDKGTRADLECSLRGHSLKDIPVTSTSSPGSSKEEVQDSQSTGEADYCRRILVRDAKGTIREIVLPKGLDLDRPKRTRTSFTAEQLYRLELEFQRCQYVVGRERTELARQLNLSETQVKVWFQNRRTKQKKDQSRDSEKRSSSTSESFATCNILRLLEQGRLLSVPAPPNLISSSQNNMGTSSGNGTNLGTSGSTSPIISTTPPGAGAFSLQVPSLAASSSPRLPTSLCFPGPLLGGLHEIPSGYGLGSSAFEPYTRLDRKDTASSKKSTS.

Disordered regions lie at residues 1–35 (MFDQ…RDKG), 50–73 (KDIP…SQST), 156–175 (RRTK…SSST), 199–223 (PPNL…LGTS), and 282–302 (AFEP…KSTS). The segment at residues 105-164 (PKRTRTSFTAEQLYRLELEFQRCQYVVGRERTELARQLNLSETQVKVWFQNRRTKQKKDQ) is a DNA-binding region (homeobox). Positions 161–172 (KKDQSRDSEKRS) are enriched in basic and acidic residues. Over residues 204-223 (SSSQNNMGTSSGNGTNLGTS) the composition is skewed to low complexity. Residues 287–296 (TRLDRKDTAS) show a composition bias toward basic and acidic residues.

This sequence belongs to the EMX homeobox family.

The protein resides in the nucleus. Transcription factor that may function in dorsoventral specification of the forebrain. Regulates the expression of Wnt signaling antagonists including the expression of a truncated tcf7l2 isoform that cannot bind ctnnb1 and acts therefore as a potent dominant-negative Wnt antagonist. Plays a crucial role in eye development and, in particular, in the specification of the ventral optic vesicle. May be a regulator of axial polarization in the retina. The protein is Ventral anterior homeobox 2a (vax2-a) of Xenopus laevis (African clawed frog).